Here is a 733-residue protein sequence, read N- to C-terminus: Catalase-peroxidase (733 aa).

A signal peptide spans 1 to 23 (MNNESKCPFAAAHGVRSPATARA). The tryptophyl-tyrosyl-methioninium (Trp-Tyr) (with M-250) cross-link spans 96 to 224 (WHSAGTYRTA…LAAVQMGLIY (129 aa)). His97 serves as the catalytic Proton acceptor. Residues 224–250 (YVNPEGPDGNPDPVASGRDVRETFARM) constitute a cross-link (tryptophyl-tyrosyl-methioninium (Tyr-Met) (with W-96)). His265 provides a ligand contact to heme b.

The protein belongs to the peroxidase family. Peroxidase/catalase subfamily. Homodimer or homotetramer. It depends on heme b as a cofactor. In terms of processing, formation of the three residue Trp-Tyr-Met cross-link is important for the catalase, but not the peroxidase activity of the enzyme.

It catalyses the reaction H2O2 + AH2 = A + 2 H2O. It carries out the reaction 2 H2O2 = O2 + 2 H2O. Bifunctional enzyme with both catalase and broad-spectrum peroxidase activity. This chain is Catalase-peroxidase, found in Azoarcus sp. (strain BH72).